Reading from the N-terminus, the 364-residue chain is DNA polymerase IV (364 aa).

Residues 14-198 form the UmuC domain; that stretch reads IIHIDMDAFF…LPVEKFHGVG (185 aa). Mg(2+) is bound by residues D18 and D116. The active site involves E117.

The protein belongs to the DNA polymerase type-Y family. Monomer. Mg(2+) is required as a cofactor.

Its subcellular location is the cytoplasm. The enzyme catalyses DNA(n) + a 2'-deoxyribonucleoside 5'-triphosphate = DNA(n+1) + diphosphate. Functionally, poorly processive, error-prone DNA polymerase involved in untargeted mutagenesis. Copies undamaged DNA at stalled replication forks, which arise in vivo from mismatched or misaligned primer ends. These misaligned primers can be extended by PolIV. Exhibits no 3'-5' exonuclease (proofreading) activity. May be involved in translesional synthesis, in conjunction with the beta clamp from PolIII. The chain is DNA polymerase IV from Lactococcus lactis subsp. cremoris (strain MG1363).